Reading from the N-terminus, the 206-residue chain is Peptidyl-tRNA hydrolase (206 aa).

Position 14 (Tyr14) interacts with tRNA. His19 functions as the Proton acceptor in the catalytic mechanism. Residues Tyr64 and Asn66 each coordinate tRNA. The tract at residues Phe182–Lys206 is disordered.

This sequence belongs to the PTH family. In terms of assembly, monomer.

The protein localises to the cytoplasm. The enzyme catalyses an N-acyl-L-alpha-aminoacyl-tRNA + H2O = an N-acyl-L-amino acid + a tRNA + H(+). Its function is as follows. Hydrolyzes ribosome-free peptidyl-tRNAs (with 1 or more amino acids incorporated), which drop off the ribosome during protein synthesis, or as a result of ribosome stalling. Functionally, catalyzes the release of premature peptidyl moieties from peptidyl-tRNA molecules trapped in stalled 50S ribosomal subunits, and thus maintains levels of free tRNAs and 50S ribosomes. The protein is Peptidyl-tRNA hydrolase of Desulforamulus reducens (strain ATCC BAA-1160 / DSM 100696 / MI-1) (Desulfotomaculum reducens).